The chain runs to 428 residues: C4-dicarboxylate transport protein (428 aa).

The next 8 membrane-spanning stretches (helical) occupy residues 8–28, 44–64, 78–98, 148–168, 184–204, 222–242, 307–327, and 355–375; these read VLYVQVIFAIVVGVILGHYYP, LIKMVIGPIIFCTVVTGIAGM, LLYFEIVSTCALVLGLAATHI, GEILQILLIALLFGSVLAHLG, VLFGIVHIVTKLAPIGAFGAM, LIGTFYLTSVVFVLVVLGAIA, IYMTMAVLFIAQATNIELTWM, and AATLAVVPTIPLSGMVLILGI.

The protein belongs to the dicarboxylate/amino acid:cation symporter (DAACS) (TC 2.A.23) family.

The protein resides in the cell inner membrane. Responsible for the transport of dicarboxylates such as succinate, fumarate, and malate from the periplasm across the membrane. The sequence is that of C4-dicarboxylate transport protein from Burkholderia pseudomallei (strain 1106a).